The chain runs to 479 residues: Integrator complex subunit 12 (479 aa).

The segment at 57-140 (SKVSLPKMTK…SPIAFQTKDI (84 aa)) is disordered. Residues 70 to 90 (KSSSSSSASSSITTTSSSKSS) are compositionally biased toward low complexity. Over residues 91 to 128 (TSEKSKKESEKRTLEKIRVDPGEGVEPPKKPRLEKQDS) the composition is skewed to basic and acidic residues. The segment at 161 to 217 (GLACVVCRQMTVTSGNQLVECQECHNLYHQECHKPQVTDKDVNDPRLVWYCARCTRQ) adopts a PHD-type zinc-finger fold. 3 disordered regions span residues 221-241 (MAQK…TTVP), 274-293 (TAAS…LPPG), and 305-479 (SNVG…KLKK). Composition is skewed to low complexity over residues 223–239 (QKTQ…LATT) and 280–289 (SSSSSSSSSS). Positions 305 to 328 (SNVGPSSTKLSTSQSGNSKTSPAA) are enriched in polar residues. The segment covering 354–364 (SSAGSGNGNNG) has biased composition (gly residues). The segment covering 399–411 (GSLSPGAAPSSSL) has biased composition (low complexity). The segment covering 412-428 (GGNGGSGGNGAGNGGNS) has biased composition (gly residues). Positions 429-451 (AGSSSSSGNNNNNGAKASADGKA) are enriched in low complexity. The span at 466 to 479 (QMVKKKAAQKKLKK) shows a compositional bias: basic residues.

It belongs to the Integrator subunit 12 family. As to quaternary structure, component of the Integrator complex, composed of core subunits INTS1, INTS2, INTS3, INTS4, INTS5, INTS6, INTS7, INTS8, INTS9/RC74, INTS10, INTS11/CPSF3L, INTS12, INTS13, INTS14 and INTS15. The core complex associates with protein phosphatase 2A subunits PPP2CA and PPP2R1A, to form the Integrator-PP2A (INTAC) complex.

Its subcellular location is the nucleus. Functionally, component of the integrator complex, a multiprotein complex that terminates RNA polymerase II (Pol II) transcription in the promoter-proximal region of genes. The integrator complex provides a quality checkpoint during transcription elongation by driving premature transcription termination of transcripts that are unfavorably configured for transcriptional elongation: the complex terminates transcription by (1) catalyzing dephosphorylation of the C-terminal domain (CTD) of Pol II subunit POLR2A/RPB1 and SUPT5H/SPT5, (2) degrading the exiting nascent RNA transcript via endonuclease activity and (3) promoting the release of Pol II from bound DNA. The integrator complex is also involved in terminating the synthesis of non-coding Pol II transcripts, such as enhancer RNAs (eRNAs), small nuclear RNAs (snRNAs), telomerase RNAs and long non-coding RNAs (lncRNAs). This is Integrator complex subunit 12 (ints12) from Danio rerio (Zebrafish).